A 236-amino-acid polypeptide reads, in one-letter code: uncharacterized protein (236 aa).

Residues 1-73 (MEPGGSENAA…GGGWGWGNTQ (73 aa)) form a disordered region.

This is an uncharacterized protein from Homo sapiens (Human).